Here is a 335-residue protein sequence, read N- to C-terminus: DNA-directed RNA polymerase subunit alpha (335 aa).

An alpha N-terminal domain (alpha-NTD) region spans residues 1–233 (MTRTANEFLT…QQIAIFVDLQ (233 aa)). An alpha C-terminal domain (alpha-CTD) region spans residues 247-335 (VDPILLRPVD…MDDRFAYRSR (89 aa)).

It belongs to the RNA polymerase alpha chain family. Homodimer. The RNAP catalytic core consists of 2 alpha, 1 beta, 1 beta' and 1 omega subunit. When a sigma factor is associated with the core the holoenzyme is formed, which can initiate transcription.

It carries out the reaction RNA(n) + a ribonucleoside 5'-triphosphate = RNA(n+1) + diphosphate. In terms of biological role, DNA-dependent RNA polymerase catalyzes the transcription of DNA into RNA using the four ribonucleoside triphosphates as substrates. The protein is DNA-directed RNA polymerase subunit alpha of Acinetobacter baumannii (strain AB307-0294).